A 398-amino-acid polypeptide reads, in one-letter code: tRNA-specific 2-thiouridylase MnmA (398 aa).

Residues 20 to 27 and L46 each bind ATP; that span reads AMSGGVDS. Catalysis depends on C114, which acts as the Nucleophile. C114 and C210 are oxidised to a cystine. ATP is bound at residue G138. Positions 160–162 are interaction with tRNA; sequence RDQ. The active-site Cysteine persulfide intermediate is the C210.

It belongs to the MnmA/TRMU family.

The protein localises to the cytoplasm. The catalysed reaction is S-sulfanyl-L-cysteinyl-[protein] + uridine(34) in tRNA + AH2 + ATP = 2-thiouridine(34) in tRNA + L-cysteinyl-[protein] + A + AMP + diphosphate + H(+). Its function is as follows. Catalyzes the 2-thiolation of uridine at the wobble position (U34) of tRNA, leading to the formation of s(2)U34. This is tRNA-specific 2-thiouridylase MnmA from Brucella canis (strain ATCC 23365 / NCTC 10854 / RM-666).